A 111-amino-acid chain; its full sequence is Iron-sulfur cluster insertion protein ErpA (111 aa).

Iron-sulfur cluster contacts are provided by C39, C103, and C105.

Belongs to the HesB/IscA family. In terms of assembly, homodimer. Requires iron-sulfur cluster as cofactor.

Functionally, required for insertion of 4Fe-4S clusters for at least IspG. The polypeptide is Iron-sulfur cluster insertion protein ErpA (Acinetobacter baumannii (strain AB307-0294)).